Consider the following 495-residue polypeptide: Bifunctional protein GlmU (495 aa).

Positions 1 to 241 (MPQQTAVVVL…AAKVTGVNDR (241 aa)) are pyrophosphorylase. UDP-N-acetyl-alpha-D-glucosamine-binding positions include 10–13 (LAAG), Lys-24, Gln-81, and 86–87 (GT). Asp-112 is a binding site for Mg(2+). The UDP-N-acetyl-alpha-D-glucosamine site is built by Gly-151, Glu-166, Asn-181, and Asn-239. Asn-239 is a binding site for Mg(2+). A linker region spans residues 242 to 262 (VQLSIATRTMNRYILERHMRA). The N-acetyltransferase stretch occupies residues 263 to 495 (GVTIIDPAST…QATEQKDGEQ (233 aa)). UDP-N-acetyl-alpha-D-glucosamine contacts are provided by Arg-344 and Lys-362. Catalysis depends on His-374, which acts as the Proton acceptor. UDP-N-acetyl-alpha-D-glucosamine-binding residues include Tyr-377 and Asn-388. Acetyl-CoA-binding positions include Ala-391, 397–398 (NY), Ser-416, and Ala-434. Residues 467-495 (GTAAATAAAQALAADEKSSQATEQKDGEQ) are disordered. The segment covering 468–479 (TAAATAAAQALA) has biased composition (low complexity). A compositionally biased stretch (basic and acidic residues) spans 480–495 (ADEKSSQATEQKDGEQ).

In the N-terminal section; belongs to the N-acetylglucosamine-1-phosphate uridyltransferase family. It in the C-terminal section; belongs to the transferase hexapeptide repeat family. As to quaternary structure, homotrimer. Requires Mg(2+) as cofactor.

The protein localises to the cytoplasm. The enzyme catalyses alpha-D-glucosamine 1-phosphate + acetyl-CoA = N-acetyl-alpha-D-glucosamine 1-phosphate + CoA + H(+). It catalyses the reaction N-acetyl-alpha-D-glucosamine 1-phosphate + UTP + H(+) = UDP-N-acetyl-alpha-D-glucosamine + diphosphate. It functions in the pathway nucleotide-sugar biosynthesis; UDP-N-acetyl-alpha-D-glucosamine biosynthesis; N-acetyl-alpha-D-glucosamine 1-phosphate from alpha-D-glucosamine 6-phosphate (route II): step 2/2. Its pathway is nucleotide-sugar biosynthesis; UDP-N-acetyl-alpha-D-glucosamine biosynthesis; UDP-N-acetyl-alpha-D-glucosamine from N-acetyl-alpha-D-glucosamine 1-phosphate: step 1/1. It participates in bacterial outer membrane biogenesis; LPS lipid A biosynthesis. Catalyzes the last two sequential reactions in the de novo biosynthetic pathway for UDP-N-acetylglucosamine (UDP-GlcNAc). The C-terminal domain catalyzes the transfer of acetyl group from acetyl coenzyme A to glucosamine-1-phosphate (GlcN-1-P) to produce N-acetylglucosamine-1-phosphate (GlcNAc-1-P), which is converted into UDP-GlcNAc by the transfer of uridine 5-monophosphate (from uridine 5-triphosphate), a reaction catalyzed by the N-terminal domain. This chain is Bifunctional protein GlmU, found in Nocardia farcinica (strain IFM 10152).